Reading from the N-terminus, the 418-residue chain is Histidinol dehydrogenase (418 aa).

3 residues coordinate NAD(+): Tyr119, Gln180, and Asn203. Positions 226, 248, and 251 each coordinate substrate. Gln248 and His251 together coordinate Zn(2+). Catalysis depends on proton acceptor residues Glu316 and His317. Residues His317, Asp350, Glu404, and His409 each coordinate substrate. Position 350 (Asp350) interacts with Zn(2+). Residue His409 participates in Zn(2+) binding.

The protein belongs to the histidinol dehydrogenase family. The cofactor is Zn(2+).

It carries out the reaction L-histidinol + 2 NAD(+) + H2O = L-histidine + 2 NADH + 3 H(+). It participates in amino-acid biosynthesis; L-histidine biosynthesis; L-histidine from 5-phospho-alpha-D-ribose 1-diphosphate: step 9/9. Its function is as follows. Catalyzes the sequential NAD-dependent oxidations of L-histidinol to L-histidinaldehyde and then to L-histidine. This is Histidinol dehydrogenase from Staphylococcus aureus (strain COL).